We begin with the raw amino-acid sequence, 204 residues long: Thymidylate kinase (204 aa).

11–18 provides a ligand contact to ATP; sequence GLDKSGKT.

Belongs to the thymidylate kinase family.

The catalysed reaction is dTMP + ATP = dTDP + ADP. It functions in the pathway pyrimidine metabolism; dTTP biosynthesis. The polypeptide is Thymidylate kinase (TMK) (Vaccinia virus (strain Ankara) (VACV)).